We begin with the raw amino-acid sequence, 414 residues long: Ribulose bisphosphate carboxylase large chain (414 aa).

Residues asparagine 100 and threonine 150 each coordinate substrate. Residue lysine 152 is the Proton acceptor of the active site. Residue lysine 154 coordinates substrate. The Mg(2+) site is built by lysine 178, aspartate 180, and glutamate 181. Residue lysine 178 is modified to N6-carboxylysine. The active-site Proton acceptor is histidine 271. Arginine 272, histidine 304, and serine 356 together coordinate substrate.

It belongs to the RuBisCO large chain family. Type I subfamily. In terms of assembly, heterohexadecamer of 8 large chains and 8 small chains; disulfide-linked. The disulfide link is formed within the large subunit homodimers. It depends on Mg(2+) as a cofactor. In terms of processing, the disulfide bond which can form in the large chain dimeric partners within the hexadecamer appears to be associated with oxidative stress and protein turnover.

Its subcellular location is the plastid. It is found in the chloroplast. The enzyme catalyses 2 (2R)-3-phosphoglycerate + 2 H(+) = D-ribulose 1,5-bisphosphate + CO2 + H2O. It catalyses the reaction D-ribulose 1,5-bisphosphate + O2 = 2-phosphoglycolate + (2R)-3-phosphoglycerate + 2 H(+). Functionally, ruBisCO catalyzes two reactions: the carboxylation of D-ribulose 1,5-bisphosphate, the primary event in carbon dioxide fixation, as well as the oxidative fragmentation of the pentose substrate in the photorespiration process. Both reactions occur simultaneously and in competition at the same active site. The sequence is that of Ribulose bisphosphate carboxylase large chain (rbcL) from Blechnopsis orientalis (Fish fern).